Reading from the N-terminus, the 88-residue chain is Large ribosomal subunit protein bL31B (88 aa).

Belongs to the bacterial ribosomal protein bL31 family. Type B subfamily. As to quaternary structure, part of the 50S ribosomal subunit.

This Paraburkholderia xenovorans (strain LB400) protein is Large ribosomal subunit protein bL31B.